A 589-amino-acid polypeptide reads, in one-letter code: Vesicular glutamate transporter 3 (589 aa).

Topologically, residues 1-76 are cytoplasmic; that stretch reads MPFKAFDTFK…CHCCGLPKRY (76 aa). Acidic residues predominate over residues 40–49; it reads TEEEDNIELN. Residues 40–61 are disordered; it reads TEEEDNIELNEEGRPVQTSRPS. A helical membrane pass occupies residues 77 to 97; the sequence is IIAIMSGLGFCISFGIRCNLG. Topologically, residues 98-130 are vesicular; the sequence is VAIVEMVNNSTVYVDGKPEIQTAQFNWDPETVG. Residue Asn106 is glycosylated (N-linked (GlcNAc...) asparagine). Residues 131–151 traverse the membrane as a helical segment; the sequence is LIHGSFFWGYIMTQIPGGFIS. The Cytoplasmic segment spans residues 152-153; sequence NK. The helical transmembrane segment at 154–174 threads the bilayer; that stretch reads FAANRVFGAAIFLTSTLNMFI. At 175-182 the chain is on the vesicular side; that stretch reads PSAARVHY. The chain crosses the membrane as a helical span at residues 183–203; the sequence is GCVMCVRILQGLVEGVTYPAC. At 204-221 the chain is on the cytoplasmic side; sequence HGMWSKWAPPLERSRLAT. The helical transmembrane segment at 222–242 threads the bilayer; it reads TSFCGSYAGAVVAMPLAGVLV. The Vesicular segment spans residues 243–249; the sequence is QYIGWSS. A helical transmembrane segment spans residues 250 to 270; the sequence is VFYIYGMFGIIWYMFWLLQAY. Residues 271 to 314 are Cytoplasmic-facing; the sequence is ECPAAHPTISNEEKTYIETSIGEGANVVSLSKFSTPWKRFFTSL. The chain crosses the membrane as a helical span at residues 315–335; sequence PVYAIIVANFCRSWTFYLLLI. Over 336 to 353 the chain is Vesicular; it reads SQPAYFEEVFGFAISKVG. The chain crosses the membrane as a helical span at residues 354 to 374; that stretch reads LLSAVPHMVMTIVVPIGGQLA. Residues 375–390 are Cytoplasmic-facing; the sequence is DYLRSRQILTTTAVRK. A helical transmembrane segment spans residues 391 to 411; the sequence is IMNCGGFGMEATLLLVVGFSH. The Vesicular portion of the chain corresponds to 412 to 413; the sequence is TK. Residues 414-434 form a helical membrane-spanning segment; sequence GVAISFLVLAVGFSGFAISGF. The Cytoplasmic portion of the chain corresponds to 435-447; that stretch reads NVNHLDIAPRYAS. The chain crosses the membrane as a helical span at residues 448–468; that stretch reads ILMGISNGVGTLSGMVCPLIV. The Vesicular segment spans residues 469–481; it reads GAMTRHKTREEWQ. Residues 482–502 form a helical membrane-spanning segment; it reads NVFLIAALVHYSGVIFYGVFA. Topologically, residues 503–586 are cytoplasmic; the sequence is SGEKQEWADP…SYQNEERNFS (84 aa). The tract at residues 559-589 is disordered; it reads KKEWKGQRGATLDEEELTSYQNEERNFSTIS. Residues 580 to 589 are compositionally biased toward basic and acidic residues; it reads NEERNFSTIS.

Belongs to the major facilitator superfamily. Sodium/anion cotransporter family. VGLUT subfamily. Expressed in amygdala, cerebellum, hippocampus, medulla, spinal cord and thalamus.

Its subcellular location is the cytoplasmic vesicle. It is found in the secretory vesicle. The protein localises to the synaptic vesicle membrane. It localises to the cell membrane. The protein resides in the synapse. Its subcellular location is the synaptosome. It catalyses the reaction L-glutamate(out) = L-glutamate(in). The enzyme catalyses 3 Na(+)(out) + phosphate(out) = 3 Na(+)(in) + phosphate(in). The catalysed reaction is chloride(in) = chloride(out). With respect to regulation, the L-glutamate uniporter activity exhibits a biphasic dependence on chloride concentration. Chloride channel activity is allosterically activated by lumenal H(+) and Cl(-) leading to synaptic vesicles acidification. The glutamate transport activity is allosterically activated by lumenal H(+) and Cl(-), preventing non-vesicular L-glutamate release. Multifunctional transporter that transports L-glutamate as well as multiple ions such as chloride, sodium and phosphate. At the synaptic vesicle membrane, mainly functions as an uniporter that mediates the uptake of L-glutamate into synaptic vesicles at presynaptic nerve terminals of excitatory neural cells. The L-glutamate uniporter activity is electrogenic and is driven by the proton electrochemical gradient, mainly by the electrical gradient established by the vacuolar H(+)-ATPase across the synaptic vesicle membrane. In addition, functions as a chloride channel that allows a chloride permeation through the synaptic vesicle membrane that affects the proton electrochemical gradient and promotes synaptic vesicles acidification. At the plasma membrane, following exocytosis, functions as a symporter of Na(+) and phosphate from the extracellular space to the cytoplasm allowing synaptic phosphate homeostasis regulation. The symporter activity is electrogenic. Moreover, operates synergistically with SLC18A3/VACHT under a constant H(+) gradient, thereby allowing striatal vesicular acetylcholine uptake. This Homo sapiens (Human) protein is Vesicular glutamate transporter 3.